The primary structure comprises 422 residues: Serine--tRNA ligase (422 aa).

227-229 (TSE) contributes to the L-serine binding site. ATP-binding positions include 258 to 260 (RRE) and Val-274. Glu-281 contacts L-serine. 345–348 (ELTS) provides a ligand contact to ATP. Thr-380 is a binding site for L-serine.

The protein belongs to the class-II aminoacyl-tRNA synthetase family. Type-1 seryl-tRNA synthetase subfamily. As to quaternary structure, homodimer. The tRNA molecule binds across the dimer.

It localises to the cytoplasm. The enzyme catalyses tRNA(Ser) + L-serine + ATP = L-seryl-tRNA(Ser) + AMP + diphosphate + H(+). It catalyses the reaction tRNA(Sec) + L-serine + ATP = L-seryl-tRNA(Sec) + AMP + diphosphate + H(+). Its pathway is aminoacyl-tRNA biosynthesis; selenocysteinyl-tRNA(Sec) biosynthesis; L-seryl-tRNA(Sec) from L-serine and tRNA(Sec): step 1/1. Functionally, catalyzes the attachment of serine to tRNA(Ser). Is also able to aminoacylate tRNA(Sec) with serine, to form the misacylated tRNA L-seryl-tRNA(Sec), which will be further converted into selenocysteinyl-tRNA(Sec). The protein is Serine--tRNA ligase of Thermobifida fusca (strain YX).